The chain runs to 233 residues: MNFKEGEVLYFNKPLGWTSFKVVGHARYHMCRRMKVKKLKVGHAGTLDPLATGVMIVCTGKATKRIEEFQYHTKEYVATIQLGATTPSYDLEHEIDATYPTEHITRELVEKTLKTFVGEIQQIPPAFSACKVDGARAYDLARKGQEVELKPKLLVIDEIELLECNLPEIKIRVVCSKGTYIRALARDIGEALQSGAHLTGLIRTRVGDVKLEQCLDPAKFAEWIDQQDVEISD.

Catalysis depends on Asp-48, which acts as the Nucleophile.

This sequence belongs to the pseudouridine synthase TruB family. Type 1 subfamily.

The catalysed reaction is uridine(55) in tRNA = pseudouridine(55) in tRNA. Responsible for synthesis of pseudouridine from uracil-55 in the psi GC loop of transfer RNAs. The sequence is that of tRNA pseudouridine synthase B from Bacteroides fragilis (strain ATCC 25285 / DSM 2151 / CCUG 4856 / JCM 11019 / LMG 10263 / NCTC 9343 / Onslow / VPI 2553 / EN-2).